The chain runs to 313 residues: uncharacterized protein (313 aa).

Residues His-8, His-10, Glu-126, His-180, His-207, and Asp-262 each contribute to the a divalent metal cation site.

It belongs to the metallo-dependent hydrolases superfamily. TatD-type hydrolase family. The cofactor is a divalent metal cation.

Functionally, putative deoxyribonuclease. This is an uncharacterized protein from Saccharomyces cerevisiae (strain ATCC 204508 / S288c) (Baker's yeast).